The sequence spans 629 residues: tRNA uridine 5-carboxymethylaminomethyl modification enzyme MnmG (629 aa).

FAD is bound by residues 13–18 (GGGHAG), V125, and S180. 273 to 287 (GPRYCPSIEDKVMRF) is a binding site for NAD(+). Residue Q370 coordinates FAD.

The protein belongs to the MnmG family. Homodimer. Heterotetramer of two MnmE and two MnmG subunits. FAD is required as a cofactor.

The protein localises to the cytoplasm. Functionally, NAD-binding protein involved in the addition of a carboxymethylaminomethyl (cmnm) group at the wobble position (U34) of certain tRNAs, forming tRNA-cmnm(5)s(2)U34. The sequence is that of tRNA uridine 5-carboxymethylaminomethyl modification enzyme MnmG from Salmonella choleraesuis (strain SC-B67).